Here is a 140-residue protein sequence, read N- to C-terminus: Large ribosomal subunit protein uL11 (140 aa).

This sequence belongs to the universal ribosomal protein uL11 family. As to quaternary structure, part of the ribosomal stalk of the 50S ribosomal subunit. Interacts with L10 and the large rRNA to form the base of the stalk. L10 forms an elongated spine to which L12 dimers bind in a sequential fashion forming a multimeric L10(L12)X complex. Post-translationally, one or more lysine residues are methylated.

Forms part of the ribosomal stalk which helps the ribosome interact with GTP-bound translation factors. The sequence is that of Large ribosomal subunit protein uL11 from Nitratidesulfovibrio vulgaris (strain ATCC 29579 / DSM 644 / CCUG 34227 / NCIMB 8303 / VKM B-1760 / Hildenborough) (Desulfovibrio vulgaris).